Consider the following 693-residue polypeptide: Protein-glutamine gamma-glutamyltransferase E (693 aa).

The residue at position 111 (Tyr111) is a Phosphotyrosine. At Thr112 the chain carries Phosphothreonine. Ca(2+) is bound by residues Ala222, Asn225, Asn227, Asp228, and Asn230. The active site involves Cys273. Asp302, Asp304, Asn306, Ser308, and Asp325 together coordinate Ca(2+). Residues His331 and Asp354 contribute to the active site. The Ca(2+) site is built by Asn394, Thr416, Glu444, and Glu449. The disordered stretch occupies residues 457 to 483; that stretch reads LDKLKPNASFGATSSRNPEGEDKEPSI.

This sequence belongs to the transglutaminase superfamily. Transglutaminase family. In terms of assembly, consists of two polypeptide chains, which are synthesized as a precursor form of a single polypeptide. Requires Ca(2+) as cofactor. Post-translationally, activated by proteolytic processing. In vitro activation is commonly achieved by cleavage with dispase, a neutral bacterial protease. Physiological activation may be catalyzed by CTSL and, to a lesser extent, by CTSS. Expressed in skin and stomach and, at lower levels, in testis, kidney and spleen (at protein level). On the basis of its catalytic activity, detected in the epidermis, around the granular and spinous layers but not in the outermost cornified layers. In hair follicles, mainly located in the medulla and the hair cortex.

Its subcellular location is the cytoplasm. It catalyses the reaction L-glutaminyl-[protein] + L-lysyl-[protein] = [protein]-L-lysyl-N(6)-5-L-glutamyl-[protein] + NH4(+). Functionally, catalyzes the calcium-dependent formation of isopeptide cross-links between glutamine and lysine residues in various proteins, as well as the conjugation of polyamines to proteins. Involved in the formation of the cornified envelope (CE), a specialized component consisting of covalent cross-links of proteins beneath the plasma membrane of terminally differentiated keratinocytes. Catalyzes small proline-rich proteins (SPRR1 and SPRR2) and LOR cross-linking to form small interchain oligomers, which are further cross-linked by TGM1 onto the growing CE scaffold. In hair follicles, involved in cross-linking structural proteins to hardening the inner root sheath. The polypeptide is Protein-glutamine gamma-glutamyltransferase E (Tgm3) (Mus musculus (Mouse)).